The primary structure comprises 314 residues: tRNA pseudouridine synthase B (314 aa).

Residue H43 participates in substrate binding. D48 serves as the catalytic Nucleophile. Residues Y76, Y179, and L200 each contribute to the substrate site.

It belongs to the pseudouridine synthase TruB family. Type 1 subfamily.

The catalysed reaction is uridine(55) in tRNA = pseudouridine(55) in tRNA. Responsible for synthesis of pseudouridine from uracil-55 in the psi GC loop of transfer RNAs. This chain is tRNA pseudouridine synthase B, found in Salmonella typhi.